Reading from the N-terminus, the 232-residue chain is Anti-sigma-K factor RskA (232 aa).

Topologically, residues 1–91 (MTEPTDFQLL…QSRRQPRWRT (91 aa)) are cytoplasmic. Residues 92–112 (AVFASAAAIAVGLGAFGLGVL) form a helical membrane-spanning segment. Residues 113-232 (TRPSASPTVA…GTVLAELPLR (120 aa)) lie on the Extracellular side of the membrane.

It belongs to the anti-sigma-K factor family.

The protein localises to the cell membrane. Its function is as follows. An anti-sigma factor for extracytoplasmic function (ECF) sigma factor SigK. ECF sigma factors are held in an inactive form by an anti-sigma factor until released by regulated intramembrane proteolysis (RIP). RIP occurs when an extracytoplasmic signal triggers a concerted proteolytic cascade to transmit information and elicit cellular responses. The membrane-spanning regulatory substrate protein is first cut extracytoplasmically (site-1 protease, S1P), then within the membrane itself (site-2 protease, S2P, Rip1), while cytoplasmic proteases finish degrading the regulatory protein, liberating the sigma factor. This Mycobacterium ulcerans (strain Agy99) protein is Anti-sigma-K factor RskA (rskA).